Reading from the N-terminus, the 434-residue chain is Probable carboxypeptidase BDBG_01803 (434 aa).

Positions 1–20 are cleaved as a signal peptide; sequence MKLSHLAAALSAQLVAPVAA. 3 N-linked (GlcNAc...) asparagine glycosylation sites follow: Asn-35, Asn-136, and Asn-150. Residue Asp-160 participates in Zn(2+) binding. Glu-192 acts as the Proton acceptor in catalysis. Residue Glu-193 participates in Zn(2+) binding. The N-linked (GlcNAc...) asparagine glycan is linked to Asn-343.

Belongs to the peptidase M20A family. Zn(2+) is required as a cofactor.

It is found in the secreted. The sequence is that of Probable carboxypeptidase BDBG_01803 from Blastomyces gilchristii (strain SLH14081) (Blastomyces dermatitidis).